The sequence spans 570 residues: Urease subunit alpha (570 aa).

The region spanning 131–570 is the Urease domain; sequence GGFDSHIHFI…LPMAQRYFMY (440 aa). Ni(2+) contacts are provided by His136, His138, and Lys219. Lys219 is modified (N6-carboxylysine). His221 is a binding site for substrate. Ni(2+) contacts are provided by His248 and His274. His322 (proton donor) is an active-site residue. Asp362 provides a ligand contact to Ni(2+).

It belongs to the metallo-dependent hydrolases superfamily. Urease alpha subunit family. Heterotrimer of UreA (gamma), UreB (beta) and UreC (alpha) subunits. Three heterotrimers associate to form the active enzyme. Ni cation is required as a cofactor. Carboxylation allows a single lysine to coordinate two nickel ions.

The protein resides in the cytoplasm. The catalysed reaction is urea + 2 H2O + H(+) = hydrogencarbonate + 2 NH4(+). The protein operates within nitrogen metabolism; urea degradation; CO(2) and NH(3) from urea (urease route): step 1/1. This is Urease subunit alpha from Rhodopseudomonas palustris (strain HaA2).